Reading from the N-terminus, the 133-residue chain is Small ribosomal subunit protein uS8 (133 aa).

It belongs to the universal ribosomal protein uS8 family. As to quaternary structure, part of the 30S ribosomal subunit. Contacts proteins S5 and S12.

In terms of biological role, one of the primary rRNA binding proteins, it binds directly to 16S rRNA central domain where it helps coordinate assembly of the platform of the 30S subunit. The sequence is that of Small ribosomal subunit protein uS8 from Lachnoclostridium phytofermentans (strain ATCC 700394 / DSM 18823 / ISDg) (Clostridium phytofermentans).